A 103-amino-acid chain; its full sequence is Matrix Gla protein (103 aa).

A signal peptide spans 1-19 (MKSLLPLAILAALAVAALC). Residue E21 is modified to 4-carboxyglutamate. Residues S22, S25, and S28 each carry the phosphoserine modification. One can recognise a Gla domain in the interval 51–97 (HAKAQERVRELNKPAQEINREACDDYKLCERYALIYGYNAAYNRYFR). 4-carboxyglutamate is present on residues E56, E60, E67, and E71. C73 and C79 are oxidised to a cystine.

The protein belongs to the osteocalcin/matrix Gla protein family. Requires vitamin K-dependent gamma-carboxylation for its function.

Its subcellular location is the secreted. In terms of biological role, associates with the organic matrix of bone and cartilage. Thought to act as an inhibitor of bone formation. This Rattus norvegicus (Rat) protein is Matrix Gla protein (Mgp).